The sequence spans 384 residues: Deoxyguanosinetriphosphate triphosphohydrolase-like protein (384 aa).

The HD domain occupies 63 to 199; sequence RLTHSLEVAT…ASLADDISYI (137 aa).

This sequence belongs to the dGTPase family. Type 2 subfamily.

This Rickettsia typhi (strain ATCC VR-144 / Wilmington) protein is Deoxyguanosinetriphosphate triphosphohydrolase-like protein.